Here is a 614-residue protein sequence, read N- to C-terminus: Major facilitator superfamily domain-containing protein 6-like protein B (614 aa).

A run of 2 helical transmembrane segments spans residues 41–61 (LGLG…VHLL) and 78–98 (FFIM…AFYP). The segment covering 177–191 (HQRFTDQFPSSSPLT) has biased composition (polar residues). The disordered stretch occupies residues 177-243 (HQRFTDQFPS…PFATHPNVSH (67 aa)). Positions 205-227 (GSGKAQKANSSKSSASNSKQRSS) are enriched in low complexity. 9 helical membrane-spanning segments follow: residues 270–290 (IFLI…PLEW), 312–332 (LWIW…FLID), 345–365 (VSFH…LSTL), 393–413 (IVLT…IQNF), 425–445 (ELYM…LYFF), 457–477 (WMVV…SFLW), 480–500 (WSVV…WWAI), 520–540 (LRWL…GFII), and 546–566 (AVLY…FLLV).

This sequence belongs to the major facilitator superfamily. MFSD6 family.

Its subcellular location is the membrane. The sequence is that of Major facilitator superfamily domain-containing protein 6-like protein B (mfsd6l-b) from Xenopus laevis (African clawed frog).